The chain runs to 69 residues: DNA gyrase inhibitor YacG (69 aa).

Zn(2+) is bound by residues Cys14, Cys17, Cys33, and Cys37. The interval 46–69 is disordered; the sequence is ADEEKSIPGAPDMSDSDGWSEDQY. The span at 59–69 shows a compositional bias: acidic residues; that stretch reads SDSDGWSEDQY.

It belongs to the DNA gyrase inhibitor YacG family. Interacts with GyrB. Zn(2+) is required as a cofactor.

Its function is as follows. Inhibits all the catalytic activities of DNA gyrase by preventing its interaction with DNA. Acts by binding directly to the C-terminal domain of GyrB, which probably disrupts DNA binding by the gyrase. The sequence is that of DNA gyrase inhibitor YacG from Aliivibrio fischeri (strain MJ11) (Vibrio fischeri).